Consider the following 385-residue polypeptide: DNA replication and repair protein RecF (385 aa).

30-37 lines the ATP pocket; sequence GPNGNGKT.

This sequence belongs to the RecF family.

The protein resides in the cytoplasm. Functionally, the RecF protein is involved in DNA metabolism; it is required for DNA replication and normal SOS inducibility. RecF binds preferentially to single-stranded, linear DNA. It also seems to bind ATP. The chain is DNA replication and repair protein RecF from Mycobacterium leprae (strain Br4923).